A 283-amino-acid chain; its full sequence is Pantothenate synthetase (283 aa).

Residue 30–37 coordinates ATP; sequence MGNLHLGH. H37 acts as the Proton donor in catalysis. Q61 provides a ligand contact to (R)-pantoate. Position 61 (Q61) interacts with beta-alanine. 149 to 152 is an ATP binding site; sequence GQKD. Residue Q155 coordinates (R)-pantoate. Residues I178 and 186-189 each bind ATP; that span reads MSSR.

The protein belongs to the pantothenate synthetase family. As to quaternary structure, homodimer.

The protein localises to the cytoplasm. The enzyme catalyses (R)-pantoate + beta-alanine + ATP = (R)-pantothenate + AMP + diphosphate + H(+). It functions in the pathway cofactor biosynthesis; (R)-pantothenate biosynthesis; (R)-pantothenate from (R)-pantoate and beta-alanine: step 1/1. In terms of biological role, catalyzes the condensation of pantoate with beta-alanine in an ATP-dependent reaction via a pantoyl-adenylate intermediate. This chain is Pantothenate synthetase, found in Shewanella pealeana (strain ATCC 700345 / ANG-SQ1).